A 299-amino-acid chain; its full sequence is tRNA dimethylallyltransferase (299 aa).

5 to 12 lines the ATP pocket; the sequence is GPTASGKT. Residue 7 to 12 participates in substrate binding; it reads TASGKT. Interaction with substrate tRNA regions lie at residues 30–33, 154–158, and 235–240; these read DSAL, QRLSR, and RCVGYR.

This sequence belongs to the IPP transferase family. Monomer. Requires Mg(2+) as cofactor.

It carries out the reaction adenosine(37) in tRNA + dimethylallyl diphosphate = N(6)-dimethylallyladenosine(37) in tRNA + diphosphate. Catalyzes the transfer of a dimethylallyl group onto the adenine at position 37 in tRNAs that read codons beginning with uridine, leading to the formation of N6-(dimethylallyl)adenosine (i(6)A). This chain is tRNA dimethylallyltransferase, found in Shewanella denitrificans (strain OS217 / ATCC BAA-1090 / DSM 15013).